The sequence spans 576 residues: Eukaryotic translation initiation factor 2A (576 aa).

4 WD repeats span residues 71–119 (LPAA…LVFS), 266–307 (DREG…VSII), 308–349 (PPAP…KKIT), and 351–396 (VEAA…MFYE). Disordered regions lie at residues 422–461 (SASLPSPPTPHASASKLAAKPSVKPAGAYRPPGARGQNST) and 475–505 (GSANKHVNSSRQRVVPGATPVIDGNKKNNKK). Over residues 475–486 (GSANKHVNSSRQ) the composition is skewed to polar residues.

Belongs to the WD repeat EIF2A family.

It is found in the cytoplasm. Its function is as follows. Functions in the early steps of protein synthesis of a small number of specific mRNAs. Acts by directing the binding of methionyl-tRNAi to 40S ribosomal subunits. In contrast to the eIF-2 complex, it binds methionyl-tRNAi to 40S subunits in a codon-dependent manner, whereas the eIF-2 complex binds methionyl-tRNAi to 40S subunits in a GTP-dependent manner. This Schizosaccharomyces pombe (strain 972 / ATCC 24843) (Fission yeast) protein is Eukaryotic translation initiation factor 2A.